Reading from the N-terminus, the 147-residue chain is Large ribosomal subunit protein uL15 (147 aa).

Residues 1–28 are compositionally biased toward basic residues; that stretch reads MIRRRKKVRKLRGSHTHGWGCKKKHRGG. Residues 1 to 43 form a disordered region; that stretch reads MIRRRKKVRKLRGSHTHGWGCKKKHRGGGSKGGRGMAGTGKRN. Residues 29-38 are compositionally biased toward gly residues; it reads GSKGGRGMAG.

It belongs to the universal ribosomal protein uL15 family. As to quaternary structure, part of the 50S ribosomal subunit.

In terms of biological role, binds to the 23S rRNA. The protein is Large ribosomal subunit protein uL15 of Pyrococcus furiosus (strain ATCC 43587 / DSM 3638 / JCM 8422 / Vc1).